The chain runs to 811 residues: RFX-like DNA-binding protein RFX1 (811 aa).

2 disordered regions span residues 48–92 (EPTS…TYLP) and 111–156 (LLHQ…QRQP). A compositionally biased stretch (low complexity) spans 51–70 (SRGSNDNSNGPSNGSSVNSN). Residues 140 to 149 (SPTPTQPPAQ) are compositionally biased toward pro residues. A Phosphoserine modification is found at S173. The disordered stretch occupies residues 181 to 222 (KSEETLNNNPPTAAKRTNTFPSIPSSTKKQKTSQEKRISSIS). Residues 185 to 204 (TLNNNPPTAAKRTNTFPSIP) are compositionally biased toward polar residues. Residues 285–360 (ALLWLMKNCK…YHYCGLKLTV (76 aa)) constitute a DNA-binding region (RFX-type winged-helix). Low complexity predominate over residues 377 to 391 (LVHNNDPISPLSSPS). The interval 377 to 461 (LVHNNDPISP…AANNPTGTLS (85 aa)) is disordered. Over residues 409–428 (NRKSLSRTGSPVKQSSNDNP) the composition is skewed to polar residues. Positions 434-445 (ESQHPNETEANK) are enriched in basic and acidic residues.

It belongs to the RFX family.

The chain is RFX-like DNA-binding protein RFX1 (RFX1) from Saccharomyces cerevisiae (strain ATCC 204508 / S288c) (Baker's yeast).